The following is a 576-amino-acid chain: Arginine--tRNA ligase (576 aa).

A 'HIGH' region motif is present at residues 122–132 (PNVAKEMHVGH).

This sequence belongs to the class-I aminoacyl-tRNA synthetase family. As to quaternary structure, monomer.

The protein localises to the cytoplasm. The catalysed reaction is tRNA(Arg) + L-arginine + ATP = L-arginyl-tRNA(Arg) + AMP + diphosphate. This Hamiltonella defensa subsp. Acyrthosiphon pisum (strain 5AT) protein is Arginine--tRNA ligase.